The sequence spans 317 residues: MSIFDWFAKQEKSEPPIQQQQKEREIADGLWTKCVACTALTYTKDLQANQLVCTECGHHFRVESSERIAQLMDKNTWKPLNDHLTPTDPLKFCDRKPYSDRIKDTQEKTGLVDAVQTGTGLIDGLPLALGVMDFRFMGGSMGSVVGEKLCRLIEYATQERLPVVIVCASGGARMQEGMLSLMQMAKISGALERHRNAKLLYIPVLTHPTTGGVTASFAMLGDLIIAEPNATIGFAGRRVIEQTLREKLPDGFQTSEYLLKHGFVDAIVSRTQLKKTLAQLISIHQPFFPVLPPLNVREKHHHHHSEEVVLKMDGKEE.

The region spanning 30 to 299 (LWTKCVACTA…VLPPLNVREK (270 aa)) is the CoA carboxyltransferase N-terminal domain. The Zn(2+) site is built by Cys-34, Cys-37, Cys-53, and Cys-56. The C4-type zinc finger occupies 34-56 (CVACTALTYTKDLQANQLVCTEC).

The protein belongs to the AccD/PCCB family. Acetyl-CoA carboxylase is a heterohexamer composed of biotin carboxyl carrier protein (AccB), biotin carboxylase (AccC) and two subunits each of ACCase subunit alpha (AccA) and ACCase subunit beta (AccD). It depends on Zn(2+) as a cofactor.

Its subcellular location is the cytoplasm. The enzyme catalyses N(6)-carboxybiotinyl-L-lysyl-[protein] + acetyl-CoA = N(6)-biotinyl-L-lysyl-[protein] + malonyl-CoA. It functions in the pathway lipid metabolism; malonyl-CoA biosynthesis; malonyl-CoA from acetyl-CoA: step 1/1. Functionally, component of the acetyl coenzyme A carboxylase (ACC) complex. Biotin carboxylase (BC) catalyzes the carboxylation of biotin on its carrier protein (BCCP) and then the CO(2) group is transferred by the transcarboxylase to acetyl-CoA to form malonyl-CoA. In Crocosphaera subtropica (strain ATCC 51142 / BH68) (Cyanothece sp. (strain ATCC 51142)), this protein is Acetyl-coenzyme A carboxylase carboxyl transferase subunit beta.